The primary structure comprises 496 residues: MWQLVFFALSCDLVLAAAYNNFRKSMDSTGKRQYQVQHGPCSYTFLLPETDNCRSPSSSYVSNAVQRDAPLDYDDSVRRLQVLENIMENNTQWLMKLESYIQDNMKKEMVEIQQNAVQNQTAVMIEIGTNLLNQTAEQTRKLTDVEAQVLNQTTRLELQLLEHSLSTNKLEKQILDQTSEINKLQDKNSFLEKKVLDMEDKHIVQLQSIKEEKDQLQVLVSKQNSIIEELEKQLVTATVNNSVLQKQQHDLMETVHNLLTMISTSNSAKHSLVAKEEQIIFRDCAEAFKSGLTTSGTYTLTFPNSTEETKAYCDMETGGGGWTVIQRREDGSVDFQRTWKEYKMGFGSPSGEHWLGNEFVSQVTNQKRYVLKIHLRDWEGNEAYSLYEHFYLSSEEFNYRIHLKGLTGTAGKISSISQPGNDFSTKDADNDKCICKCSQMLTGGWWFDACGPSNLNGMYYPQRQNTNKFNGIKWYYWKGSGYSLKATTMMIRPADF.

An N-terminal signal peptide occupies residues 1–18 (MWQLVFFALSCDLVLAAA). Residues N89, N119, N133, N151, N240, and N304 are each glycosylated (N-linked (GlcNAc...) asparagine). The stretch at 130-255 (NLLNQTAEQT…KQQHDLMETV (126 aa)) forms a coiled coil. The Fibrinogen C-terminal domain occupies 275-495 (KEEQIIFRDC…ATTMMIRPAD (221 aa)). The cysteines at positions 284 and 313 are disulfide-linked. 4 residues coordinate Ca(2+): D429, D431, C433, and C435. 2 disulfides stabilise this stretch: C433–C435 and C437–C450.

In terms of assembly, interacts with TEK/TIE2, competing for the same binding site as ANGPT1. Interacts with ITGA5. Interacts with SVEP1/polydom. Interacts with THBD; this interaction significantly inhibits the generation of activated PC and TAFIa/CPB2 by the thrombin/thrombomodulin complex.

It is found in the secreted. In terms of biological role, binds to TEK/TIE2, competing for the ANGPT1 binding site, and modulating ANGPT1 signaling. Can induce tyrosine phosphorylation of TEK/TIE2 in the absence of ANGPT1. In the absence of angiogenic inducers, such as VEGF, ANGPT2-mediated loosening of cell-matrix contacts may induce endothelial cell apoptosis with consequent vascular regression. In concert with VEGF, it may facilitate endothelial cell migration and proliferation, thus serving as a permissive angiogenic signal. Involved in the regulation of lymphangiogenesis. This is Angiopoietin-2 (ANGPT2) from Sus scrofa (Pig).